A 329-amino-acid polypeptide reads, in one-letter code: Phenylalanine--tRNA ligase alpha subunit (329 aa).

Glu254 contributes to the Mg(2+) binding site.

Belongs to the class-II aminoacyl-tRNA synthetase family. Phe-tRNA synthetase alpha subunit type 1 subfamily. As to quaternary structure, tetramer of two alpha and two beta subunits. Mg(2+) serves as cofactor.

The protein resides in the cytoplasm. The enzyme catalyses tRNA(Phe) + L-phenylalanine + ATP = L-phenylalanyl-tRNA(Phe) + AMP + diphosphate + H(+). This chain is Phenylalanine--tRNA ligase alpha subunit, found in Haemophilus influenzae (strain 86-028NP).